The sequence spans 118 residues: Basic phospholipase A2 acanthin-2 (118 aa).

7 disulfide bridges follow: Cys11–Cys71, Cys27–Cys117, Cys29–Cys45, Cys44–Cys98, Cys51–Cys91, Cys60–Cys84, and Cys78–Cys89. 3 residues coordinate Ca(2+): Tyr28, Gly30, and Gly32. The active site involves His48. Position 49 (Asp49) interacts with Ca(2+). Asp92 is a catalytic residue.

Ca(2+) serves as cofactor. Expressed by the venom gland.

It localises to the secreted. It catalyses the reaction a 1,2-diacyl-sn-glycero-3-phosphocholine + H2O = a 1-acyl-sn-glycero-3-phosphocholine + a fatty acid + H(+). Its function is as follows. Snake venom phospholipase A2 (PLA2) that potently inhibits ADP-(IC(50)=12 nM) and collagen-induced (IC(50)=4 nM) platelet aggregation when tested on human whole blood. PLA2 catalyzes the calcium-dependent hydrolysis of the 2-acyl groups in 3-sn-phosphoglycerides. In Acanthophis antarcticus (Common death adder), this protein is Basic phospholipase A2 acanthin-2.